Here is an 831-residue protein sequence, read N- to C-terminus: Translation initiation factor IF-2 (831 aa).

Residues 329–499 form the tr-type G domain; it reads TRAPVVTVMG…LLIAEMQDLK (171 aa). Residues 338–345 are G1; that stretch reads GHVDHGKT. A GTP-binding site is contributed by 338–345; that stretch reads GHVDHGKT. A G2 region spans residues 363–367; sequence GITQH. Positions 385-388 are G3; it reads DTPG. GTP is bound by residues 385-389 and 439-442; these read DTPGH and NKID. Residues 439 to 442 are G4; the sequence is NKID. Residues 475–477 form a G5 region; sequence SAL.

This sequence belongs to the TRAFAC class translation factor GTPase superfamily. Classic translation factor GTPase family. IF-2 subfamily.

Its subcellular location is the cytoplasm. In terms of biological role, one of the essential components for the initiation of protein synthesis. Protects formylmethionyl-tRNA from spontaneous hydrolysis and promotes its binding to the 30S ribosomal subunits. Also involved in the hydrolysis of GTP during the formation of the 70S ribosomal complex. This Rickettsia rickettsii (strain Iowa) protein is Translation initiation factor IF-2.